We begin with the raw amino-acid sequence, 272 residues long: Streptomycin 3''-kinase (272 aa).

The Proton acceptor role is filled by D190.

Belongs to the aminoglycoside phosphotransferase family.

It carries out the reaction streptomycin + ATP = streptomycin 3''-phosphate + ADP + H(+). Its function is as follows. The aminoglycoside phosphotransferases achieve inactivation of their antibiotic substrates by phosphorylation. In Streptomyces griseus, this protein is Streptomycin 3''-kinase (aphE).